A 380-amino-acid chain; its full sequence is High affinity transport system protein p37 (380 aa).

The first 26 residues, 1–26 (MLKRKKLLQGFLKFLPLIIPATIFVS), serve as a signal peptide directing secretion. The N-palmitoyl cysteine moiety is linked to residue Cys27. A lipid anchor (S-diacylglycerol cysteine) is attached at Cys27. The interval 285 to 304 (NHFYTPTENNGKGDSEKSNN) is disordered.

Its subcellular location is the cell membrane. Its function is as follows. P37 is part of a high-affinity transport system. The polypeptide is High affinity transport system protein p37 (p37) (Mycoplasma pneumoniae (strain ATCC 29342 / M129 / Subtype 1) (Mycoplasmoides pneumoniae)).